The sequence spans 130 residues: Small ribosomal subunit protein uS9 (130 aa).

This sequence belongs to the universal ribosomal protein uS9 family.

The protein is Small ribosomal subunit protein uS9 of Pseudomonas fluorescens (strain SBW25).